The primary structure comprises 441 residues: ACT domain-containing protein ACR8 (441 aa).

ACT domains are found at residues 34–110, 115–196, 248–324, and 326–405; these read IVKV…NIEV, ALEL…SAAK, VVNV…ALEG, and RLEL…TMYH.

In terms of tissue distribution, expressed in roots, leaves, flowers and siliques.

Functionally, may bind amino acids. The chain is ACT domain-containing protein ACR8 from Arabidopsis thaliana (Mouse-ear cress).